The sequence spans 510 residues: NAD(P)H-quinone oxidoreductase subunit 2 A, chloroplastic (510 aa).

The next 13 membrane-spanning stretches (helical) occupy residues 24-44, 57-77, 99-119, 124-144, 149-169, 183-203, 227-247, 295-315, 323-343, 347-367, 395-415, 418-438, and 484-504; these read LLLFHGSFIFPECILIFGLIL, IPWLYFISSTSLVMSITALLF, IFQFLILLCSTLCIPLSVEYI, MAITEFLLFVLTATLGGMFLC, LITIFVAPECFSLCSYLLSGY, YLLMGGASSSILVHGFSWLYG, PGISIALIFITVGIGFKLSPA, WHLLLEILAILSMILGNLIAI, MLAYSSIGQIGYVIIGIIVGD, GYASMITYMLFYISMNLGTFA, ALSSALCLLSLGGLPPLAGFF, LHLFWCGWQAGLYFLVSIGLL, and MIVCVIASTIPGISMNPIIAI.

This sequence belongs to the complex I subunit 2 family. As to quaternary structure, NDH is composed of at least 16 different subunits, 5 of which are encoded in the nucleus.

Its subcellular location is the plastid. The protein localises to the chloroplast thylakoid membrane. The catalysed reaction is a plastoquinone + NADH + (n+1) H(+)(in) = a plastoquinol + NAD(+) + n H(+)(out). The enzyme catalyses a plastoquinone + NADPH + (n+1) H(+)(in) = a plastoquinol + NADP(+) + n H(+)(out). Functionally, NDH shuttles electrons from NAD(P)H:plastoquinone, via FMN and iron-sulfur (Fe-S) centers, to quinones in the photosynthetic chain and possibly in a chloroplast respiratory chain. The immediate electron acceptor for the enzyme in this species is believed to be plastoquinone. Couples the redox reaction to proton translocation, and thus conserves the redox energy in a proton gradient. This Platanus occidentalis (Sycamore) protein is NAD(P)H-quinone oxidoreductase subunit 2 A, chloroplastic.